Here is a 722-residue protein sequence, read N- to C-terminus: Endoglucanase F (722 aa).

The signal sequence occupies residues 1 to 29 (MSKNFKRVGAVAVAAAMSLSIMATTSINA). The interval 142–165 (PEFQDPSKYPSPLDTSQPVGRDPI) is disordered. A compositionally biased stretch (polar residues) spans 154–165 (LDTSQPVGRDPI). The 62-residue stretch at 661-722 (PEKLLGDVNG…LLKKALLSIQ (62 aa)) folds into the Dockerin domain.

The protein belongs to the glycosyl hydrolase 48 (cellulase L) family.

The enzyme catalyses Endohydrolysis of (1-&gt;4)-beta-D-glucosidic linkages in cellulose, lichenin and cereal beta-D-glucans.. Probable endoglucanase involved in the degradation of cellulose or related beta-glucans. In Ruminiclostridium cellulolyticum (strain ATCC 35319 / DSM 5812 / JCM 6584 / H10) (Clostridium cellulolyticum), this protein is Endoglucanase F (celCCF).